The following is a 401-amino-acid chain: Nodulation protein E (401 aa).

One can recognise a Ketosynthase family 3 (KS3) domain in the interval Asp-2–Gln-400. Catalysis depends on for beta-ketoacyl synthase activity residues Cys-162, His-294, and His-331. A helical transmembrane segment spans residues His-329–Ile-348.

The protein belongs to the thiolase-like superfamily. Beta-ketoacyl-ACP synthases family.

It is found in the cell inner membrane. Proposed to synthesize NOD factor fatty acyl chain. Involved in the synthesis of a highly unsaturated fatty acid moiety, which forms part of a lipo-oligosaccharide that is responsible for host specificity. The protein is Nodulation protein E (nodE) of Rhizobium leguminosarum bv. trifolii.